Consider the following 348-residue polypeptide: Alanine racemase (348 aa).

Catalysis depends on lysine 34, which acts as the Proton acceptor; specific for D-alanine. Lysine 34 is modified (N6-(pyridoxal phosphate)lysine). A substrate-binding site is contributed by arginine 127. Tyrosine 243 acts as the Proton acceptor; specific for L-alanine in catalysis. Residue methionine 291 participates in substrate binding.

The protein belongs to the alanine racemase family. Requires pyridoxal 5'-phosphate as cofactor.

It catalyses the reaction L-alanine = D-alanine. Its pathway is amino-acid biosynthesis; D-alanine biosynthesis; D-alanine from L-alanine: step 1/1. Its function is as follows. Catalyzes the interconversion of L-alanine and D-alanine. May also act on other amino acids. This chain is Alanine racemase (alr), found in Coprothermobacter proteolyticus (strain ATCC 35245 / DSM 5265 / OCM 4 / BT).